The primary structure comprises 300 residues: Recombination-promoting nuclease RpnC (300 aa).

It belongs to the Rpn/YhgA-like nuclease family.

In terms of biological role, a low activity DNA endonuclease yielding 3'-hydroxyl ends. Upon expression enhances RecA-independent DNA recombination 2.9-fold, concomitantly reducing viability by 59% and inducing DNA damage as measured by induction of the SOS repair response. The chain is Recombination-promoting nuclease RpnC from Escherichia coli (strain K12).